A 63-amino-acid chain; its full sequence is Large ribosomal subunit protein bL28 (63 aa).

Belongs to the bacterial ribosomal protein bL28 family.

The protein is Large ribosomal subunit protein bL28 of Syntrophotalea carbinolica (strain DSM 2380 / NBRC 103641 / GraBd1) (Pelobacter carbinolicus).